Reading from the N-terminus, the 296-residue chain is Protoheme IX farnesyltransferase (296 aa).

9 consecutive transmembrane segments (helical) span residues 13-33 (IIFG…KGII), 35-55 (YPLF…GCVF), 84-104 (VTLI…YIAA), 107-127 (LAMW…SLYM), 132-152 (VYGT…GYCA), 162-182 (LILL…IAIF), 208-228 (ITLY…VGYA), 229-249 (GYKY…MALR), and 264-284 (FVFS…DFSV).

The protein belongs to the UbiA prenyltransferase family. Protoheme IX farnesyltransferase subfamily.

The protein localises to the cell inner membrane. It catalyses the reaction heme b + (2E,6E)-farnesyl diphosphate + H2O = Fe(II)-heme o + diphosphate. Its pathway is porphyrin-containing compound metabolism; heme O biosynthesis; heme O from protoheme: step 1/1. In terms of biological role, converts heme B (protoheme IX) to heme O by substitution of the vinyl group on carbon 2 of heme B porphyrin ring with a hydroxyethyl farnesyl side group. This Edwardsiella ictaluri (strain 93-146) protein is Protoheme IX farnesyltransferase.